The sequence spans 603 residues: ATP-dependent lipid A-core flippase (603 aa).

The next 4 membrane-spanning stretches (helical) occupy residues 20 to 40 (LGYV…FLIF), 79 to 99 (LVYA…LGSF), 170 to 190 (VFLF…MLAI), and 269 to 289 (PMLQ…VLWL). The ABC transmembrane type-1 domain occupies 31 to 324 (LLSIVGFLIF…LSEVSSTVQR (294 aa)). One can recognise an ABC transporter domain in the interval 356-592 (LEVRNLSFRY…NGHYARLHAM (237 aa)). An ATP-binding site is contributed by 390 to 397 (GRSGSGKS).

Belongs to the ABC transporter superfamily. Lipid exporter (TC 3.A.1.106) family. In terms of assembly, homodimer.

It localises to the cell inner membrane. It catalyses the reaction ATP + H2O + lipid A-core oligosaccharideSide 1 = ADP + phosphate + lipid A-core oligosaccharideSide 2.. Its function is as follows. Involved in lipopolysaccharide (LPS) biosynthesis. Translocates lipid A-core from the inner to the outer leaflet of the inner membrane. Transmembrane domains (TMD) form a pore in the inner membrane and the ATP-binding domain (NBD) is responsible for energy generation. This chain is ATP-dependent lipid A-core flippase, found in Pseudomonas aeruginosa (strain ATCC 15692 / DSM 22644 / CIP 104116 / JCM 14847 / LMG 12228 / 1C / PRS 101 / PAO1).